We begin with the raw amino-acid sequence, 193 residues long: dCTP deaminase (193 aa).

DCTP is bound by residues 110–115, Asp128, 136–138, Tyr171, Lys178, and Gln182; these read RSSLAR and VLE. The Proton donor/acceptor role is filled by Glu138. Residues 170 to 181 show a composition bias toward basic and acidic residues; it reads PYNRRQDAKYRD. The segment at 170 to 193 is disordered; the sequence is PYNRRQDAKYRDQQGAVASRIDKD.

It belongs to the dCTP deaminase family. As to quaternary structure, homotrimer.

The enzyme catalyses dCTP + H2O + H(+) = dUTP + NH4(+). It participates in pyrimidine metabolism; dUMP biosynthesis; dUMP from dCTP (dUTP route): step 1/2. Functionally, catalyzes the deamination of dCTP to dUTP. In Enterobacter sp. (strain 638), this protein is dCTP deaminase.